The chain runs to 914 residues: Neuropilin-1 (914 aa).

A signal peptide spans 1–18; the sequence is MDWGLFLHCAALTFTLSR. The Extracellular portion of the chain corresponds to 20 to 847; the sequence is LRSDKCGDTI…PGNVLKTLDP (828 aa). Cystine bridges form between Cys-25-Cys-52, Cys-80-Cys-102, and Cys-145-Cys-171. CUB domains lie at 25-139 and 145-263; these read CGDT…YEVF and CSRN…YSVS. An N-linked (GlcNAc...) asparagine glycan is attached at Asn-148. Residues Glu-193, Asp-207, and Asp-248 each contribute to the Ca(2+) site. A disulfide bridge connects residues Cys-204 and Cys-226. N-linked (GlcNAc...) asparagine glycosylation is present at Asn-259. 2 disulfide bridges follow: Cys-273–Cys-422 and Cys-429–Cys-581. F5/8 type C domains are found at residues 273 to 422 and 429 to 581; these read CMEP…VYGC and CSGM…LLGC. Asn-520 carries an N-linked (GlcNAc...) asparagine glycan. An O-linked (Xyl...) (chondroitin sulfate) serine; alternate glycan is attached at Ser-610. Ser-610 carries an O-linked (Xyl...) (heparan sulfate) serine; alternate glycan. The region spanning 636 to 801 is the MAM domain; that stretch reads PYNLNCGFGW…NHISQEDCQK (166 aa). A disordered region spans residues 809 to 829; it reads IVEEDPESNQTGFTPSYRTDE. The segment covering 816–825 has biased composition (polar residues); the sequence is SNQTGFTPSY. Asn-817 carries an N-linked (GlcNAc...) asparagine glycan. The chain crosses the membrane as a helical span at residues 848 to 870; the sequence is ILITIIAMSALGVLLGAICGVVL. Over 871-914 the chain is Cytoplasmic; sequence YCACWHNGMSERNLSALENYNFELVDGVKLKKDKLNTQNSYSEA.

Belongs to the neuropilin family. In terms of assembly, homodimer, and heterodimer. As to expression, developing nervous system; optic tectum (layers D and E of SGFS), amacrine cells of retina, neurites of dorsal root ganglia. Also expressed in non-neuronal cells, e.g. blood vessels in the entire embryo.

It localises to the mitochondrion membrane. Its subcellular location is the cell membrane. Functionally, receptor involved in the development of the cardiovascular system, in angiogenesis, in the formation of certain neuronal circuits and in organogenesis outside the nervous system. Mediates the chemorepulsant activity of semaphorins. Binding to VEGFA initiates a signaling pathway needed for motor neuron axon guidance and cell body migration, including for the caudal migration of facial motor neurons from rhombomere 4 to rhombomere 6 during embryonic development. Regulates mitochondrial iron transport via interaction. This is Neuropilin-1 (NRP1) from Gallus gallus (Chicken).